We begin with the raw amino-acid sequence, 156 residues long: Nucleosome assembly protein 1-like 5 (156 aa).

The span at 1 to 16 shows a compositional bias: basic and acidic residues; that stretch reads MADPEKQGPAESRAED. Positions 1–58 are disordered; sequence MADPEKQGPAESRAEDEVMEGAQGGEDAATGDSAAAPAAEEPQAPAENAPKPKKDFME. Over residues 34–49 the composition is skewed to low complexity; sequence AAAPAAEEPQAPAENA. Residues 68-94 adopt a coiled-coil conformation; the sequence is VLALKKLQKRCDKIEAKFDKEFQALEK. Positions 120-156 are disordered; sequence TLEGEDDEDDEEEDDEEEEEEEEAAAGATGGPNFAKK. The span at 122-143 shows a compositional bias: acidic residues; it reads EGEDDEDDEEEDDEEEEEEEEA.

The protein belongs to the nucleosome assembly protein (NAP) family.

The protein localises to the nucleus. This chain is Nucleosome assembly protein 1-like 5 (Nap1l5), found in Mus musculus (Mouse).